The chain runs to 496 residues: Glutamate--tRNA ligase (496 aa).

Residues proline 12 to leucine 22 carry the 'HIGH' region motif. Positions lysine 256–arginine 260 match the 'KMSKS' region motif. Lysine 259 serves as a coordination point for ATP.

It belongs to the class-I aminoacyl-tRNA synthetase family. Glutamate--tRNA ligase type 1 subfamily. In terms of assembly, monomer.

It is found in the cytoplasm. It catalyses the reaction tRNA(Glu) + L-glutamate + ATP = L-glutamyl-tRNA(Glu) + AMP + diphosphate. Functionally, catalyzes the attachment of glutamate to tRNA(Glu) in a two-step reaction: glutamate is first activated by ATP to form Glu-AMP and then transferred to the acceptor end of tRNA(Glu). In Mycobacteroides abscessus (strain ATCC 19977 / DSM 44196 / CCUG 20993 / CIP 104536 / JCM 13569 / NCTC 13031 / TMC 1543 / L948) (Mycobacterium abscessus), this protein is Glutamate--tRNA ligase.